Here is a 562-residue protein sequence, read N- to C-terminus: Phosphomethylpyrimidine synthase (562 aa).

Substrate is bound by residues Asn179, Met208, Tyr237, His273, 293-295, 334-337, and Glu373; these read SRG and DGLR. Residue His377 coordinates Zn(2+). Substrate is bound at residue Tyr400. Position 441 (His441) interacts with Zn(2+). The [4Fe-4S] cluster site is built by Cys521, Cys524, and Cys529.

Belongs to the ThiC family. It depends on [4Fe-4S] cluster as a cofactor.

The catalysed reaction is 5-amino-1-(5-phospho-beta-D-ribosyl)imidazole + S-adenosyl-L-methionine = 4-amino-2-methyl-5-(phosphooxymethyl)pyrimidine + CO + 5'-deoxyadenosine + formate + L-methionine + 3 H(+). It functions in the pathway cofactor biosynthesis; thiamine diphosphate biosynthesis. Functionally, catalyzes the synthesis of the hydroxymethylpyrimidine phosphate (HMP-P) moiety of thiamine from aminoimidazole ribotide (AIR) in a radical S-adenosyl-L-methionine (SAM)-dependent reaction. This is Phosphomethylpyrimidine synthase from Geobacillus kaustophilus (strain HTA426).